Reading from the N-terminus, the 446-residue chain is Palmitoyltransferase PFA4 (446 aa).

The Cytoplasmic segment spans residues 1–8 (MAVQLKWP). A helical transmembrane segment spans residues 9-29 (ILGVIIPCIIIFSLSYGSHYF). Topologically, residues 30 to 40 (ILRHHLTMKQQ) are lumenal. The chain crosses the membrane as a helical span at residues 41 to 61 (LIYEFYVTMIWISYLLAIYTN). At 62 to 161 (PGRVPKNYKP…GNNNLPHFMR (100 aa)) the chain is on the cytoplasmic side. The 51-residue stretch at 114-164 (RYCKKCNNYKPPRSHHCKICQQCVLQMDHHCPWTLNCVGNNNLPHFMRFLG) folds into the DHHC domain. Residue Cys144 is the S-palmitoyl cysteine intermediate of the active site. The chain crosses the membrane as a helical span at residues 162–182 (FLGWIIWGTGYLMIQLIKLII). The Lumenal segment spans residues 183–201 (NYYENSNMPHYLFNKTELV). A helical membrane pass occupies residues 202–222 (AIIAITPLNFFVFASILVLFI). Residues 223-446 (RCLINICKGM…TDFGVDEDSD (224 aa)) lie on the Cytoplasmic side of the membrane.

Belongs to the DHHC palmitoyltransferase family. PFA4 subfamily.

The protein resides in the endoplasmic reticulum membrane. It carries out the reaction L-cysteinyl-[protein] + hexadecanoyl-CoA = S-hexadecanoyl-L-cysteinyl-[protein] + CoA. In terms of biological role, mediates the reversible addition of palmitate to target proteins, thereby regulating their membrane association and biological function. The sequence is that of Palmitoyltransferase PFA4 from Candida albicans (strain SC5314 / ATCC MYA-2876) (Yeast).